The primary structure comprises 426 residues: Vitamin D3 receptor (426 aa).

Positions 21–96 (PRICGVCGDR…IGMMKEFILT (76 aa)) form a DNA-binding region, nuclear receptor. Residues cysteine 24, cysteine 27, cysteine 41, cysteine 44, cysteine 60, cysteine 66, cysteine 76, and cysteine 79 each coordinate Zn(2+). 2 consecutive NR C4-type zinc fingers follow at residues 24–44 (CGVC…CEGC) and 60–84 (CPFN…LKRC). Residues 97-126 (DEEVQRKREMILKRKEEEALKDSLRPKLSE) form a hinge region. The NR LBD domain occupies 127 to 422 (EQQRIITTLL…LTPLLFEVFG (296 aa)). Position 143 (tyrosine 143) interacts with calcitriol. Residues 147 to 215 (YSDFSQFRPP…NEEDSDDPSV (69 aa)) form a disordered region. The segment covering 175–191 (SFSGNSSSSCSDHCTSS) has biased composition (low complexity). Polar residues predominate over residues 192 to 204 (PDTMEPTSFSNQD). Calcitriol is bound at residue serine 235. An interaction with coactivator LXXLL motif region spans residues 244–262 (KMIPGFRDLTPEDQIVLLK). Residues arginine 272, serine 276, histidine 304, and histidine 396 each coordinate calcitriol. The 9aaTAD signature appears at 415 to 423 (PLLFEVFGN).

It belongs to the nuclear hormone receptor family. NR1 subfamily. As to quaternary structure, homodimer in the absence of bound vitamin D3. Heterodimer with RXRA after vitamin D3 binding. Interacts with MED1, NCOA1, NCOA2, NCOA3 and NCOA6 coactivators, leading to a strong increase of transcription of target genes. Interacts with the corepressor NCOR1. Interacts with SNW1. Interacts with IRX4, the interaction does not affect its transactivation activity. Interacts with CRY1. Interacts with CRY2 in a ligand-dependent manner. Ubiquitinated by UBR5, leading to its degradation: UBR5 specifically recognizes and binds ligand-bound VDR when it is not associated with coactivators (NCOAs). In presence of NCOAs, the UBR5-degron is not accessible, preventing its ubiquitination and degradation. As to expression, mammary gland, expression increases during lactation. Also found in colon, expression is down-regulated at parturition.

The protein resides in the nucleus. Its subcellular location is the cytoplasm. In terms of biological role, nuclear receptor for calcitriol, the active form of vitamin D3 which mediates the action of this vitamin on cells. Enters the nucleus upon vitamin D3 binding where it forms heterodimers with the retinoid X receptor/RXR. The VDR-RXR heterodimers bind to specific response elements on DNA and activate the transcription of vitamin D3-responsive target genes. Plays a central role in calcium homeostasis. Also functions as a receptor for the secondary bile acid lithocholic acid (LCA) and its metabolites. The protein is Vitamin D3 receptor (VDR) of Bos taurus (Bovine).